The following is a 1143-amino-acid chain: Serine/threonine-protein kinase BRI1-like 2 (1143 aa).

An N-terminal signal peptide occupies residues 1–31 (MTTSPIRVRIRTRIQISFIFLLTHLSQSSSS). Topologically, residues 32-756 (DQSSLKTDSL…GTRAASWANS (725 aa)) are extracellular. The Cys pair 1 motif lies at 68–75 (CQFSGVTC). 24 LRR repeats span residues 77–101 (GGRV…AFTS), 102–125 (LDSL…LLLL), 126–150 (PLTL…FFSK), 151–175 (YSNL…LFLS), 177–200 (KKLQ…TIPL), 203–227 (CVSM…LINC), 228–250 (TNLK…SFGE), 251–275 (LKLL…IGDT), 277–299 (RSLQ…SLSS), 300–324 (CSWL…ILRS), 326–349 (GSLQ…ISAC), 351–373 (SLRI…LCPG), 374–398 (AASL…ISQC), 399–422 (SELR…IGNL), 424–446 (KLEQ…IGKL), 447–470 (QNLK…FFNC), 472–493 (NIEW…DFGI), 494–518 (LSRL…LGKC), 520–542 (TLVW…LGRQ), 570–594 (VGGL…KSCD), 610–634 (YQTI…IGEM), 635–660 (IALQ…QLKN), 662–681 (GVFD…SFSN), and 682–707 (LSFL…QLST). N-linked (GlcNAc...) asparagine glycosylation is found at asparagine 84 and asparagine 118. N-linked (GlcNAc...) asparagine glycans are attached at residues asparagine 163, asparagine 188, asparagine 226, and asparagine 234. Asparagine 288 and asparagine 312 each carry an N-linked (GlcNAc...) asparagine glycan. The N-linked (GlcNAc...) asparagine glycan is linked to asparagine 412. N-linked (GlcNAc...) asparagine glycosylation is present at asparagine 469. Asparagine 506 is a glycosylation site (N-linked (GlcNAc...) asparagine). N-linked (GlcNAc...) asparagine glycosylation is present at asparagine 681. A Cys pair 2 motif is present at residues 720–727 (CGVPLPEC). Residues 757-777 (IVLGVLISAASVCILIVWAIA) form a helical membrane-spanning segment. The Cytoplasmic portion of the chain corresponds to 778 to 1143 (VRARRRDADD…NNSHSHSNSL (366 aa)). Threonine 835 carries the post-translational modification Phosphothreonine. The region spanning 838-1129 (FSAASMIGHG…LQVVASLREL (292 aa)) is the Protein kinase domain. ATP contacts are provided by residues 844 to 852 (IGHGGFGEV) and lysine 866. At tyrosine 911 the chain carries Phosphotyrosine. Residue aspartate 966 is the Proton acceptor of the active site. Serine 1001 is modified (phosphoserine). A Phosphotyrosine modification is found at tyrosine 1009.

This sequence belongs to the protein kinase superfamily. Ser/Thr protein kinase family. In terms of assembly, interacts with TTL3. As to expression, expressed in provascular and procambial sites throughout plant development. Expressed throughout globe- to heart-staged embryos. Then, it is restricted to procambial cells by the late torpedo stage, and this pattern persists throughout the duration of embryo development. After germination, it is expressed not only in procambial cells throughout the plant but also in all lateral organ primordia before the onset of vascularization.

The protein localises to the cell membrane. The enzyme catalyses L-seryl-[protein] + ATP = O-phospho-L-seryl-[protein] + ADP + H(+). The catalysed reaction is L-threonyl-[protein] + ATP = O-phospho-L-threonyl-[protein] + ADP + H(+). Receptor with a serine/threonine-protein kinase activity, which may transduce extracellular spatial and temporal signals into downstream cell differentiation responses in provascular and procambial cells. In contrast to BRI1, BRL1 and BRL3, it does not bind brassinolide. The sequence is that of Serine/threonine-protein kinase BRI1-like 2 from Arabidopsis thaliana (Mouse-ear cress).